The chain runs to 383 residues: Cysteine protease StiP (383 aa).

Belongs to the cysteine protease StiP family. Is probably processed via an autocatalytic removal of a proregion of about 100 amino acids.

With respect to regulation, is inhibited by bromopyruvate in vitro. Activity is not affected by the presence of tellurite. Functionally, cysteine protease that may play a role in regulating cell morphology in response to stressful conditions which likely cause oxidative damage. Appears to catalyze its own cleavage, which probably leads to its activation. The sequence is that of Cysteine protease StiP (stiP) from Acinetobacter baylyi (strain ATCC 33305 / BD413 / ADP1).